The primary structure comprises 794 residues: Hyaluronan mediated motility receptor (794 aa).

Positions 1 to 87 (MSFPKAPLKR…SQKNDKDVKR (87 aa)) are disordered. Ser20 bears the Phosphoserine mark. The span at 74–87 (SKKDSQKNDKDVKR) shows a compositional bias: basic and acidic residues. Residues Asn134, Asn279, Asn446, Asn467, Asn488, Asn509, Asn530, Asn561, and Asn601 are each glycosylated (N-linked (GlcNAc...) asparagine). The segment at 365-630 (EEMTSEKNVF…ITDLKNQLRQ (266 aa)) is required for interaction with FAM83D. A run of 5 repeats spans residues 442-462 (QEKYNDTAQSLRDVTAQLESV), 463-483 (QEKYNDTAQSLRDVTAQLESE), 484-504 (QEKYNDTAQSLRDVTAQLESE), 505-525 (QEKYNDTAQSLRDVTAQLESV), and 526-546 (QEKYNDTAQSLRDVTAQLESY). Residues 442–546 (QEKYNDTAQS…RDVTAQLESY (105 aa)) form a 5 X 21 AA tandem repeats region. Hyaluronic acid-binding regions lie at residues 719–729 (KQKIKHVVKLK) and 741–750 (KLRSQLVKRK). Thr784 carries the phosphothreonine modification.

Interacts with ANKRD26. Interacts with DYNLL1. Interacts with FAM83D/CHICA. Ubiquitously expressed.

It localises to the cell surface. Its subcellular location is the cytoplasm. It is found in the cytoskeleton. The protein localises to the spindle. Functionally, receptor for hyaluronic acid (HA). Involved in cell motility. When hyaluronan binds to HMMR, the phosphorylation of a number of proteins, including the PTK2/FAK1 occurs. May also be involved in cellular transformation and metastasis formation, and in regulating extracellular-regulated kinase (ERK) activity. May act as a regulator of adipogenesis. The protein is Hyaluronan mediated motility receptor (Hmmr) of Mus musculus (Mouse).